Reading from the N-terminus, the 117-residue chain is MAEQISSAKAEARTVRIAPRKARLVVDLIRGKSVAEALAILEFTPRAASPIVEKVLRSAIANAEHNYDLESANLYVSEAYVNEGATLKRFRPRAKGMASPINKRTSHVVVVVSEKND.

The protein belongs to the universal ribosomal protein uL22 family. In terms of assembly, part of the 50S ribosomal subunit.

This protein binds specifically to 23S rRNA; its binding is stimulated by other ribosomal proteins, e.g. L4, L17, and L20. It is important during the early stages of 50S assembly. It makes multiple contacts with different domains of the 23S rRNA in the assembled 50S subunit and ribosome. In terms of biological role, the globular domain of the protein is located near the polypeptide exit tunnel on the outside of the subunit, while an extended beta-hairpin is found that lines the wall of the exit tunnel in the center of the 70S ribosome. The chain is Large ribosomal subunit protein uL22 from Lactobacillus helveticus (strain DPC 4571).